The sequence spans 196 residues: Holliday junction branch migration complex subunit RuvA (196 aa).

The tract at residues 1–65 (MIGYLRGKII…EDALQLFGFH (65 aa)) is domain I. A domain II region spans residues 66–140 (DKEEKNLFLS…GKLVSIEEGG (75 aa)). The flexible linker stretch occupies residues 140 to 144 (GVVAK). Residues 145–196 (AKSVAHTQITSALLNLGYKSQLVDQFVSSLPADIAVEDGIRKGFQTLSGGLS) form a domain III region.

This sequence belongs to the RuvA family. As to quaternary structure, homotetramer. Forms an RuvA(8)-RuvB(12)-Holliday junction (HJ) complex. HJ DNA is sandwiched between 2 RuvA tetramers; dsDNA enters through RuvA and exits via RuvB. An RuvB hexamer assembles on each DNA strand where it exits the tetramer. Each RuvB hexamer is contacted by two RuvA subunits (via domain III) on 2 adjacent RuvB subunits; this complex drives branch migration. In the full resolvosome a probable DNA-RuvA(4)-RuvB(12)-RuvC(2) complex forms which resolves the HJ.

It localises to the cytoplasm. Its function is as follows. The RuvA-RuvB-RuvC complex processes Holliday junction (HJ) DNA during genetic recombination and DNA repair, while the RuvA-RuvB complex plays an important role in the rescue of blocked DNA replication forks via replication fork reversal (RFR). RuvA specifically binds to HJ cruciform DNA, conferring on it an open structure. The RuvB hexamer acts as an ATP-dependent pump, pulling dsDNA into and through the RuvAB complex. HJ branch migration allows RuvC to scan DNA until it finds its consensus sequence, where it cleaves and resolves the cruciform DNA. This chain is Holliday junction branch migration complex subunit RuvA, found in Bdellovibrio bacteriovorus (strain ATCC 15356 / DSM 50701 / NCIMB 9529 / HD100).